A 522-amino-acid chain; its full sequence is Gypsy retrotransposon integrase-like protein 1 (522 aa).

An Integrase catalytic domain is found at 135–292 (KVENPWSLVT…TPYFQMFSRN (158 aa)). At S502 the chain carries Phosphoserine.

In terms of tissue distribution, widely expressed. Also found in tumors originating from parathyroid gland, colon, stomach, bladder, uterus and prostate.

The polypeptide is Gypsy retrotransposon integrase-like protein 1 (GIN1) (Homo sapiens (Human)).